A 206-amino-acid chain; its full sequence is Large ribosomal subunit protein uL4 (206 aa).

It belongs to the universal ribosomal protein uL4 family. As to quaternary structure, part of the 50S ribosomal subunit.

Its function is as follows. One of the primary rRNA binding proteins, this protein initially binds near the 5'-end of the 23S rRNA. It is important during the early stages of 50S assembly. It makes multiple contacts with different domains of the 23S rRNA in the assembled 50S subunit and ribosome. In terms of biological role, forms part of the polypeptide exit tunnel. The chain is Large ribosomal subunit protein uL4 from Rhodopseudomonas palustris (strain BisB18).